A 193-amino-acid polypeptide reads, in one-letter code: uncharacterized protein (193 aa).

A helical transmembrane segment spans residues 119–143 (LAGSLLAATGMTLGIFGMGITGTCW).

It localises to the mitochondrion membrane. This is an uncharacterized protein from Saccharomyces cerevisiae (strain ATCC 204508 / S288c) (Baker's yeast).